Here is a 122-residue protein sequence, read N- to C-terminus: Large ribosomal subunit protein uL14 (122 aa).

Belongs to the universal ribosomal protein uL14 family. In terms of assembly, part of the 50S ribosomal subunit. Forms a cluster with proteins L3 and L19. In the 70S ribosome, L14 and L19 interact and together make contacts with the 16S rRNA in bridges B5 and B8.

In terms of biological role, binds to 23S rRNA. Forms part of two intersubunit bridges in the 70S ribosome. The sequence is that of Large ribosomal subunit protein uL14 from Acidovorax sp. (strain JS42).